The chain runs to 1186 residues: MSVACVLKRKAVLWQDSFSPHLKHHPQEPANPNMPVVLTSGTGSQAQPQPAANQALAAGTHSSPVPGSIGVAGRSQDDAMVDYFFQRQHGEQLGGGGSGGGGYNNSKHRWPTGDNIHAEHQVRSMDELNHDFQALALEGRAMGEQLLPGKKFWETDESSKDGPKGIFLGDQWRDSAWGTSDHSVSQPIMVQRRPGQSFHVNSEVNSVLSPRSESGGLGVSMVEYVLSSSPGDSCLRKGGFGPRDADSDENDKGEKKNKGTFDGDKLGDLKEEGDVMDKTNGLPVQNGIDADVKDFSRTPGNCQNSANEVDLLGPNQNGSEGLAQLTSTNGAKPVEDFSNMESQSVPLDPMEHVGMEPLQFDYSGTQVPVDSAAATVGLFDYNSQQQLFQRPNALAVQQLTAAQQQQYALAAAHQPHIGLAPAAFVPNPYIISAAPPGTDPYTAGLAAAATLGPAVVPHQYYGVTPWGVYPASLFQQQAAAAAAATNSANQQTTPQAQQGQQQVLRGGASQRPLTPNQNQQGQQTDPLVAAAAVNSALAFGQGLAAGMPGYPVLAPAAYYDQTGALVVNAGARNGLGAPVRLVAPAPVIISSSAAQAAVAAAAASANGAAGGLAGTTNGPFRPLGTQQPQPQPQQQPNNNLASSSFYGNNSLNSNSQSSSLFSQGSAQPANTSLGFGSSSSLGATLGSALGGFGTAVANSNTGSGSRRDSLTGSSDLYKRTSSSLTPIGHSFYNGLSFSSSPGPVGMPLPSQGPGHSQTPPPSLSSHGSSSSLNLGGLTNGSGRYISAAPGAEAKYRSASSASSLFSPSSTLFSSSRLRYGMSDVMPSGRSRLLEDFRNNRYPNLQLREIAGHIMEFSQDQHGSRFIQLKLERATPAERQLVFNEILQAAYQLMVDVFGNYVIQKFFEFGSLEQKLALAERIRGHVLSLALQMYGCRVIQKALEFIPSDQQNEMVRELDGHVLKCVKDQNGNHVVQKCIECVQPQSLQFIIDAFKGQVFALSTHPYGCRVIQRILEHCLPDQTLPILEELHQHTEQLVQDQYGNYVIQHVLEHGRPEDKSKIVAEIRGNVLVLSQHKFASNVVEKCVTHASRTERAVLIDEVCTMNDGPHSALYTMMKDQYANYVVQKMIDVAEPGQRKIVMHKIRPHIATLRKYTYGKHILAKLEKYYMKNGVDLGPICGPPNGII.

Serine 2 carries the N-acetylserine modification. Serine 19 bears the Phosphoserine mark. Residues 22-73 form a disordered region; that stretch reads LKHHPQEPANPNMPVVLTSGTGSQAQPQPAANQALAAGTHSSPVPGSIGVAG. Positions 45–58 are enriched in low complexity; sequence QAQPQPAANQALAA. Phosphoserine is present on residues serine 75, serine 98, and serine 106. At threonine 112 the chain carries Phosphothreonine. Phosphoserine is present on residues serine 124, serine 159, serine 197, serine 209, and serine 229. The interval 233-272 is disordered; sequence SCLRKGGFGPRDADSDENDKGEKKNKGTFDGDKLGDLKEE. Basic and acidic residues predominate over residues 250-272; it reads NDKGEKKNKGTFDGDKLGDLKEE. Position 305 is a phosphoserine (serine 305). Low complexity predominate over residues 485–502; sequence TNSANQQTTPQAQQGQQQ. Disordered regions lie at residues 485–524 and 613–648; these read TNSA…GQQT and AGTT…FYGN. Residues 511–524 show a composition bias toward polar residues; that stretch reads RPLTPNQNQQGQQT. Position 514 is a phosphothreonine (threonine 514). Over residues 626–639 the composition is skewed to low complexity; it reads QQPQPQPQQQPNNN. Serine 709 and serine 714 each carry phosphoserine. The interval 742-773 is disordered; sequence GPVGMPLPSQGPGHSQTPPPSLSSHGSSSSLN. A compositionally biased stretch (low complexity) spans 763-773; that stretch reads LSSHGSSSSLN. Arginine 796 carries the post-translational modification Omega-N-methylarginine. Phosphoserine is present on residues serine 806 and serine 822. In terms of domain architecture, PUM-HD spans 828–1168; the sequence is GRSRLLEDFR…HILAKLEKYY (341 aa). Pumilio repeat units lie at residues 848 to 883, 884 to 919, 920 to 955, 956 to 991, 992 to 1027, 1028 to 1063, 1064 to 1099, and 1103 to 1142; these read EIAG…LVFN, EILQ…ALAE, RIRG…EMVR, ELDG…FIID, AFKG…PILE, ELHQ…KIVA, EIRG…VLID, and TMND…IVMH. The adenine-nucleotide binding in RNA target stretch occupies residues 863 to 867; that stretch reads SRFIQ. Positions 899 to 903 are uracil-nucleotide binding in RNA target; it reads NYVIQ. The tract at residues 935-939 is adenine-nucleotide binding in RNA target; that stretch reads CRVIQ. A non-specific-nucleotide binding in RNA target region spans residues 971–975; the sequence is NHVVQ. Residues 1007-1011 are adenine-nucleotide binding in RNA target; the sequence is CRVIQ. A uracil-nucleotide binding in RNA target region spans residues 1043–1047; the sequence is NYVIQ. The interval 1079–1083 is guanine-nucleotide binding in RNA target; the sequence is SNVVE. Residues 1122–1126 form a uracil-nucleotide binding in RNA target region; it reads NYVVQ.

As to quaternary structure, recruits the CCR4-POP2-NOT deadenylase leading to translational inhibition and mRNA degradation. In case of viral infection, interacts with DHX58. Interacts with TRIM71 (via NHL repeats) in an RNA-dependent manner. Phosphorylation at Ser-714 promotes RNA-binding activity. Following growth factor stimulation phosphorylated at Ser-714, promoting binding to the 3'-UTR of CDKN1B/p27 mRNA. In terms of tissue distribution, expressed in brain, heart, kidney, muscle, intestine and stomach. Not expressed in cerebellum, corpus callosum, caudate nucleus, hippocampus, medulla oblongata and putamen. Expressed in all fetal tissues tested.

It is found in the cytoplasm. It localises to the P-body. The protein resides in the cytoplasmic granule. Sequence-specific RNA-binding protein that acts as a post-transcriptional repressor by binding the 3'-UTR of mRNA targets. Binds to an RNA consensus sequence, the Pumilio Response Element (PRE), 5'-UGUANAUA-3', that is related to the Nanos Response Element (NRE). Mediates post-transcriptional repression of transcripts via different mechanisms: acts via direct recruitment of the CCR4-POP2-NOT deadenylase leading to translational inhibition and mRNA degradation. Also mediates deadenylation-independent repression by promoting accessibility of miRNAs. Following growth factor stimulation, phosphorylated and binds to the 3'-UTR of CDKN1B/p27 mRNA, inducing a local conformational change that exposes miRNA-binding sites, promoting association of miR-221 and miR-222, efficient suppression of CDKN1B/p27 expression, and rapid entry to the cell cycle. Acts as a post-transcriptional repressor of E2F3 mRNAs by binding to its 3'-UTR and facilitating miRNA regulation. Represses a program of genes necessary to maintain genomic stability such as key mitotic, DNA repair and DNA replication factors. Its ability to repress those target mRNAs is regulated by the lncRNA NORAD (non-coding RNA activated by DNA damage) which, due to its high abundance and multitude of PUMILIO binding sites, is able to sequester a significant fraction of PUM1 and PUM2 in the cytoplasm. Involved in neuronal functions by regulating ATXN1 mRNA levels: acts by binding to the 3'-UTR of ATXN1 transcripts, leading to their down-regulation independently of the miRNA machinery. Plays a role in cytoplasmic sensing of viral infection. In testis, acts as a post-transcriptional regulator of spermatogenesis by binding to the 3'-UTR of mRNAs coding for regulators of p53/TP53. Involved in embryonic stem cell renewal by facilitating the exit from the ground state: acts by targeting mRNAs coding for naive pluripotency transcription factors and accelerates their down-regulation at the onset of differentiation. Binds specifically to miRNA MIR199A precursor, with PUM2, regulates miRNA MIR199A expression at a postranscriptional level. The protein is Pumilio homolog 1 of Homo sapiens (Human).